The sequence spans 385 residues: Tryptophan--tRNA ligase (385 aa).

The 'HIGH' region motif lies at 89 to 98; sequence PSSKTMHIGH. A 'KMSKS' region motif is present at residues 268 to 272; that stretch reads KMSAS.

It belongs to the class-I aminoacyl-tRNA synthetase family. Homodimer.

The enzyme catalyses tRNA(Trp) + L-tryptophan + ATP = L-tryptophyl-tRNA(Trp) + AMP + diphosphate + H(+). The polypeptide is Tryptophan--tRNA ligase (Encephalitozoon cuniculi (strain GB-M1) (Microsporidian parasite)).